A 302-amino-acid polypeptide reads, in one-letter code: Hydra actinoporin-like toxin 4 (302 aa).

Positions 1-17 (MLLFKLIVCFFFIFAIG) are cleaved as a signal peptide. The segment at 22–93 (KKDETSGENE…PAPKQTTTKK (72 aa)) is disordered. Residues 60-75 (KPPAAKPPAASKITKP) are compositionally biased toward low complexity. A compositionally biased stretch (pro residues) spans 76-86 (QVPPQKKPPAP). The Cell attachment site motif lies at 274 to 276 (KAG).

It belongs to the actinoporin family. HALT subfamily. Octamer or nonamer in membranes. Monomer in the soluble state. In vitro, interacts with folate receptor alpha (of target organism).

It localises to the nematocyst. The protein localises to the secreted. It is found in the target cell membrane. In terms of biological role, pore-forming protein that forms hydrophilic pores and causes cytolysis. Compared to equinatoxin-2 (AC P61914), it reveals lower cytolysis activity (5-12-fold difference, tested on erythrocytes), a larger pore size (probably 2-3 nm) and different affinity to membrane lipids (100-fold lower affinity to sphingomyelin). Binds to sulfatides. Shows cytolytic activity on HeLa cells, with a different potency than its paralogs (from most potent to less potent: HALT-4&gt;HALT-6~HALT-1&gt;HALT-3&gt;HALT-7&gt;HALT-2). This recombinant protein has the highest cytolytic activity compared to other rHALT proteins, probably due to its longer N-terminal sequence that may penetrate the lipid bilayer more effectively. Pore formation is a multi-step process that involves specific recognition of membrane lipid by a protein aromatic residues rich region, firm binding to the membrane (mainly driven by hydrophobic interactions) accompanied by the transfer of the N-terminal region to the lipid-water interface and finally pore formation after oligomerization of monomers. In vitro, binds to the folate receptor alpha (FOLR1), a GPI-anchored membrane protein that plays a major role in the uptake of folate/folic acid into cells via endocytosis, suggesting a possible involvement of this receptor in the mechanism of HALT-1-induced cell lysis. In vivo, does not cause visible paralysis in larvae of the blowfly Sarcophaga faculata, the most common arthropod prey of Hydra. This is Hydra actinoporin-like toxin 4 from Hydra vulgaris (Hydra).